We begin with the raw amino-acid sequence, 89 residues long: Small ribosomal subunit protein uS15 (89 aa).

The interval 1-25 (MSLDTTEKQQLINTHQTHGTDTGSA) is disordered. Polar residues predominate over residues 8–25 (KQQLINTHQTHGTDTGSA).

It belongs to the universal ribosomal protein uS15 family. As to quaternary structure, part of the 30S ribosomal subunit. Forms a bridge to the 50S subunit in the 70S ribosome, contacting the 23S rRNA.

One of the primary rRNA binding proteins, it binds directly to 16S rRNA where it helps nucleate assembly of the platform of the 30S subunit by binding and bridging several RNA helices of the 16S rRNA. Functionally, forms an intersubunit bridge (bridge B4) with the 23S rRNA of the 50S subunit in the ribosome. This Parasynechococcus marenigrum (strain WH8102) protein is Small ribosomal subunit protein uS15.